Reading from the N-terminus, the 439-residue chain is Sodium-dependent phosphate transport protein 3 (439 aa).

N-linked (GlcNAc...) asparagine glycans are attached at residues Asn-47, Asn-56, Asn-68, and Asn-69. The next 9 membrane-spanning stretches (helical) occupy residues 98–118, 130–150, 183–203, 211–231, 273–293, 317–337, 350–369, 374–396, and 415–435; these read INYGIILTLIPSGYLAGIFGA, SLLTLFTPLAADFGVILVIMV, TIAGSGSAFGSFIILCVGGLI, FIFYIFGSTGCVCCLLWFTVI, LPLWAIFLGFFSHFWLCTIIL, LPFIAAASCTILGGQLADFLL, LFSSLGLLLPSICAVALPFV, VITIILLILIPGTSNLCDSGFII, and GFGLIAGIISSTATGFLISQV.

This sequence belongs to the major facilitator superfamily. Sodium/anion cotransporter family. Expressed in the small intestine, kidney, spleen and testis. Not detected in fetal brain, bone marrow, and mammary gland.

The protein localises to the apical cell membrane. It carries out the reaction 3 Na(+)(out) + phosphate(out) = 3 Na(+)(in) + phosphate(in). It catalyses the reaction urate(out) + n chloride(in) = urate(in) + n chloride(out). Acts as a membrane potential-dependent organic anion transporter, the transport requires a low concentration of chloride ions. Mediates chloride-dependent transport of urate. Can actively transport inorganic phosphate into cells via Na(+) cotransport. The sequence is that of Sodium-dependent phosphate transport protein 3 (SLC17A2) from Homo sapiens (Human).